Consider the following 298-residue polypeptide: tRNA-cytidine(32) 2-sulfurtransferase (298 aa).

A PP-loop motif motif is present at residues 48 to 53; the sequence is SGGKDS. Cysteine 123, cysteine 126, and cysteine 214 together coordinate [4Fe-4S] cluster.

Belongs to the TtcA family. Homodimer. The cofactor is Mg(2+). It depends on [4Fe-4S] cluster as a cofactor.

The protein resides in the cytoplasm. The enzyme catalyses cytidine(32) in tRNA + S-sulfanyl-L-cysteinyl-[cysteine desulfurase] + AH2 + ATP = 2-thiocytidine(32) in tRNA + L-cysteinyl-[cysteine desulfurase] + A + AMP + diphosphate + H(+). It participates in tRNA modification. Functionally, catalyzes the ATP-dependent 2-thiolation of cytidine in position 32 of tRNA, to form 2-thiocytidine (s(2)C32). The sulfur atoms are provided by the cysteine/cysteine desulfurase (IscS) system. This is tRNA-cytidine(32) 2-sulfurtransferase from Nitrosospira multiformis (strain ATCC 25196 / NCIMB 11849 / C 71).